A 165-amino-acid polypeptide reads, in one-letter code: Small ribosomal subunit protein uS17m (165 aa).

It belongs to the universal ribosomal protein uS17 family. Component of the mitochondrial small ribosomal subunit (mt-SSU). Mature N.crassa 74S mitochondrial ribosomes consist of a small (37S) and a large (54S) subunit. The 37S small subunit contains a 16S ribosomal RNA (16S mt-rRNA) and 32 different proteins. The 54S large subunit contains a 23S rRNA (23S mt-rRNA) and 42 different proteins. uS17m interacts with the F(1)-ATPase inhibitor IF(1) dimer.

It localises to the mitochondrion. Component of the mitochondrial ribosome (mitoribosome), a dedicated translation machinery responsible for the synthesis of mitochondrial genome-encoded proteins, including at least some of the essential transmembrane subunits of the mitochondrial respiratory chain. The mitoribosomes are attached to the mitochondrial inner membrane and translation products are cotranslationally integrated into the membrane. This is Small ribosomal subunit protein uS17m (mrps17) from Neurospora crassa (strain ATCC 24698 / 74-OR23-1A / CBS 708.71 / DSM 1257 / FGSC 987).